A 415-amino-acid polypeptide reads, in one-letter code: Serine hydroxymethyltransferase (415 aa).

(6S)-5,6,7,8-tetrahydrofolate is bound by residues Leu-121 and 125-127 (GHL). Lys-229 carries the N6-(pyridoxal phosphate)lysine modification.

This sequence belongs to the SHMT family. Homodimer. The cofactor is pyridoxal 5'-phosphate.

The protein resides in the cytoplasm. It carries out the reaction (6R)-5,10-methylene-5,6,7,8-tetrahydrofolate + glycine + H2O = (6S)-5,6,7,8-tetrahydrofolate + L-serine. The protein operates within one-carbon metabolism; tetrahydrofolate interconversion. It participates in amino-acid biosynthesis; glycine biosynthesis; glycine from L-serine: step 1/1. In terms of biological role, catalyzes the reversible interconversion of serine and glycine with tetrahydrofolate (THF) serving as the one-carbon carrier. This reaction serves as the major source of one-carbon groups required for the biosynthesis of purines, thymidylate, methionine, and other important biomolecules. Also exhibits THF-independent aldolase activity toward beta-hydroxyamino acids, producing glycine and aldehydes, via a retro-aldol mechanism. This chain is Serine hydroxymethyltransferase, found in Bordetella petrii (strain ATCC BAA-461 / DSM 12804 / CCUG 43448).